The chain runs to 522 residues: MEELQGYLEKDRSRQQPFLYPLLFQEYIYALAHNRGLKGSLFYEPTEVFGYDSKSSLALVKRLIIRIYQQNDFLSVVNDSNKNRFVSHHRDNFCYSHFYSQMISEGFAILVEIPFSPRLVSYFEKKEIPKSHNLRSIHSIFPFLEDKLLHLNYVSDILIPHPIHMEILVQILQCWIQDVPLLHFLRFFLHKYHNWNSFLITPKKSIFVFSKENKRLFRFLYNSYVSECEFLLVFLRKQSSYLRLTSFGFFLERRHFYVKIERLQMQHLILIVVCRDFFQGTLWSFKDPFMHYVRCQGKAVLASKGTHLLMKKWKYNFVNLWQYYFNFWYQSYRIHINQLSNYSFYFLGYLSSLLKNSSTVRNQMLENSFLIDTVTNKLETLVPVIFLIGSLXKVQFCTVSGHPISKPIWADLSDSEIIERFGRMCRNLSHYHSGSSKKQGLYRIKYILRLSCARTLARKHKSTGRTFLRRLGSGLLEEFFTEEEQVLSLILPKKIPFTFYGSHKERIWYLDIIRINDLVNHS.

This sequence belongs to the intron maturase 2 family. MatK subfamily.

The protein localises to the plastid. It localises to the chloroplast. Functionally, usually encoded in the trnK tRNA gene intron. Probably assists in splicing its own and other chloroplast group II introns. In Iris tenax (Oregon iris), this protein is Maturase K.